A 61-amino-acid chain; its full sequence is Small ribosomal subunit protein bS21 (61 aa).

A disordered region spans residues 34 to 61 (KREHYESPSVKRKKKSEAARKRKYKYNK). Residues 43–61 (VKRKKKSEAARKRKYKYNK) are compositionally biased toward basic residues.

Belongs to the bacterial ribosomal protein bS21 family.

This chain is Small ribosomal subunit protein bS21, found in Thermoanaerobacter pseudethanolicus (strain ATCC 33223 / 39E) (Clostridium thermohydrosulfuricum).